The chain runs to 867 residues: Protein translocase subunit SecA (867 aa).

ATP contacts are provided by residues Gln-85, 103–107 (GEGKT), and Asp-491.

It belongs to the SecA family. As to quaternary structure, monomer and homodimer. Part of the essential Sec protein translocation apparatus which comprises SecA, SecYEG and auxiliary proteins SecDF. Other proteins may also be involved.

It is found in the cell membrane. Its subcellular location is the cytoplasm. It carries out the reaction ATP + H2O + cellular proteinSide 1 = ADP + phosphate + cellular proteinSide 2.. Its function is as follows. Part of the Sec protein translocase complex. Interacts with the SecYEG preprotein conducting channel. Has a central role in coupling the hydrolysis of ATP to the transfer of proteins into and across the cell membrane, serving as an ATP-driven molecular motor driving the stepwise translocation of polypeptide chains across the membrane. This chain is Protein translocase subunit SecA, found in Mycoplasmopsis pulmonis (strain UAB CTIP) (Mycoplasma pulmonis).